The primary structure comprises 584 residues: Putative sel1-like repeat-containing protein L18 (584 aa).

Sel1-like repeat units lie at residues 132–167 (SMAQYNLGQMYYRGISTKKNIQKAIKWITKSADQNN), 168–203 (KYGLINLARFYEYGDGVLLDIDKATQLLEQASCQNF), 204–237 (SKAQFYLGRIYMYKDPPDYKLAFKYYQQAANQNH), 238–273 (SSAQYFIAVFYKTGKCVAQDYKKAVHWLTLAASQGL), 274–309 (NSAKIKLAEMYMKGIDVEQNYHKAFELLNSSIYDDG), and 316–351 (EVAMTELACMYKRGLGIEKNISKAIYLHIKSRNTKN).

The sequence is that of Putative sel1-like repeat-containing protein L18 from Acanthamoeba polyphaga (Amoeba).